The sequence spans 45 residues: Large ribosomal subunit protein bL34 (45 aa).

Positions 1 to 45 (MTKRTFGGTSRKRKRVSGFRVRMRSHTGRRVIKSRRKRGRERIAV) are disordered. Residues 10 to 45 (SRKRKRVSGFRVRMRSHTGRRVIKSRRKRGRERIAV) are compositionally biased toward basic residues.

This sequence belongs to the bacterial ribosomal protein bL34 family.

This Prochlorococcus marinus subsp. pastoris (strain CCMP1986 / NIES-2087 / MED4) protein is Large ribosomal subunit protein bL34.